The chain runs to 387 residues: Formate-dependent phosphoribosylglycinamide formyltransferase (387 aa).

Residues E21–L22 and E81 each bind N(1)-(5-phospho-beta-D-ribosyl)glycinamide. ATP-binding positions include R113, K154, S159–Q164, E193–I196, and E201. An ATP-grasp domain is found at T118 to L306. Mg(2+) is bound by residues E265 and E277. N(1)-(5-phospho-beta-D-ribosyl)glycinamide contacts are provided by residues D284, K352, and R359–R360.

Belongs to the PurK/PurT family. As to quaternary structure, homodimer.

The catalysed reaction is N(1)-(5-phospho-beta-D-ribosyl)glycinamide + formate + ATP = N(2)-formyl-N(1)-(5-phospho-beta-D-ribosyl)glycinamide + ADP + phosphate + H(+). The protein operates within purine metabolism; IMP biosynthesis via de novo pathway; N(2)-formyl-N(1)-(5-phospho-D-ribosyl)glycinamide from N(1)-(5-phospho-D-ribosyl)glycinamide (formate route): step 1/1. Involved in the de novo purine biosynthesis. Catalyzes the transfer of formate to 5-phospho-ribosyl-glycinamide (GAR), producing 5-phospho-ribosyl-N-formylglycinamide (FGAR). Formate is provided by PurU via hydrolysis of 10-formyl-tetrahydrofolate. This Wolinella succinogenes (strain ATCC 29543 / DSM 1740 / CCUG 13145 / JCM 31913 / LMG 7466 / NCTC 11488 / FDC 602W) (Vibrio succinogenes) protein is Formate-dependent phosphoribosylglycinamide formyltransferase.